Here is a 267-residue protein sequence, read N- to C-terminus: MILTFIKIKKYRIKYLIIKKQKAFGRNNLGFITCRAKGGGIKRNLYKILDSNFANYGMSFSSAFYVNIIYDSFRRIFLAVYFIINSIIKNIYRYFLLTKNLKIGSQINFGFKAPLKIGNALPLYKILLGSFIYNIEIRYKGKGSLVKNANHNAIILMIGDIYVTVKLPSGEIKLLLKNLFCILGQLEIRRKVNKNIKKHAGFNRKLSIRPKIRGAAMNAVDHPHGGGEGKASVGFKFARTLWGKAFKGIKTRKKNKHLSRFILQHRL.

The protein belongs to the universal ribosomal protein uL2 family. In terms of assembly, part of the 50S ribosomal subunit.

It is found in the plastid. Its subcellular location is the apicoplast. The protein is Large ribosomal subunit protein uL2c (rpl2) of Toxoplasma gondii.